We begin with the raw amino-acid sequence, 1129 residues long: MKRGEKPEGYRQMRPKTFPASNYPGSSRQMLQEIRESLRNLSKPSDASKAEHNLNKMSTEDPRQVRNPPKFGTHHKALQEIRNSLLPFANETSSSRSPSEVNPQMFQDLQAAGFDEDMVIQALQKTNNRSIEAAVEFISKMSYQDPRREQMSAAAARPINATMKPGNVQHSINRKQSWKGSKESLVPQRHGPSLGENVVYRSESPNSQADVGRPLSGSGIAAFAQAHPSNGQRVNPPPPPQVRSVTPPPPPRGQTPPPRGTTPPPPSWEPSSQTKRYSGNMEYVISRISPVPPGAWQEGYPPPPLTTSPMNPPSQAQRAISSVPVGRQPIIMQSTSKFNFTPGRPGVQNGGGQSDFIVHQNVPTGSVTRQPPPPYPLTPANGQSPSALQTGASAAPPSFANGNVPQSMMVPNRNSHNMELYNINVPGLQTAWPQSSSAPAQSSPSGGHEIPTWQPNIPVRSNSFNNPLGSRASHSANSQPSATTVTAITPAPIQQPVKSMRVLKPELQTALAPTHPSWMPQPVQTVQPTPFSEGTASSVPVIPPVAEAPSYQGPPPPYPKHLLHQNPSVPPYESVSKPCKDEQPSLPKEDDSEKSADSGDSGDKEKKQITTSPITVRKNKKDEERRESRIQSYSPQAFKFFMEQHVENVLKSHQQRLHRKKQLENEMMRVGLSQDAQDQMRKMLCQKESNYIRLKRAKMDKSMFVKIKTLGIGAFGEVCLARKVDTKALYATKTLRKKDVLLRNQVAHVKAERDILAEADNEWVVRLYYSFQDKDNLYFVMDYIPGGDMMSLLIRMGIFPENLARFYIAELTCAVESVHKMGFIHRDIKPDNILIDRDGHIKLTDFGLCTGFRWTHDSKYYQSGDHPRQDSMDFSNEWGDPSNCRCGDRLKPLERRAARQHQRCLAHSLVGTPNYIAPEVLLRTGYTQLCDWWSVGVILFEMLVGQPPFLAQTPLETQMKVINWQTSLHIPPQAKLSPEASDLIIKLCRGPEDRLGKNGADEIKAHPFFKTIDFSSDLRQQSASYIPKITHPTDTSNFDPVDPDKLWSDGSEEENISDTLNGWYKNGKHPEHAFYEFTFRRFFDDNGYPYNYPKPIEYEYIHSQGSEQQSDEDDQHTSSDGNNRDLVYV.

A compositionally biased stretch (basic and acidic residues) spans 1–11 (MKRGEKPEGYR). Positions 1–71 (MKRGEKPEGY…PRQVRNPPKF (71 aa)) are disordered. Polar residues predominate over residues 19 to 30 (PASNYPGSSRQM). The segment covering 46–64 (DASKAEHNLNKMSTEDPRQ) has biased composition (basic and acidic residues). Residues 100–141 (EVNPQMFQDLQAAGFDEDMVIQALQKTNNRSIEAAVEFISKM) enclose the UBA domain. Disordered regions lie at residues 148–216 (REQM…RPLS) and 228–276 (PSNG…QTKR). Residues 235–268 (NPPPPPQVRSVTPPPPPRGQTPPPRGTTPPPPSW) are compositionally biased toward pro residues. A Phosphothreonine modification is found at T246. S278 bears the Phosphoserine mark. Disordered stretches follow at residues 292–317 (PPGA…SQAQ), 363–407 (PTGS…VPQS), 432–492 (WPQS…TPAP), and 513–630 (PTHP…ESRI). Residues 300–312 (YPPPPLTTSPMNP) are compositionally biased toward pro residues. The PPxY motif 1 motif lies at 372–375 (PPPY). The segment covering 380–392 (ANGQSPSALQTGA) has biased composition (polar residues). Over residues 433 to 445 (PQSSSAPAQSSPS) the composition is skewed to low complexity. The segment covering 453–481 (WQPNIPVRSNSFNNPLGSRASHSANSQPS) has biased composition (polar residues). Phosphoserine; by NUAK1 and NUAK2 is present on S463. 2 stretches are compositionally biased toward low complexity: residues 482–492 (ATTVTAITPAP) and 520–530 (PQPVQTVQPTP). The tract at residues 525 to 654 (TVQPTPFSEG…HVENVLKSHQ (130 aa)) is interaction with YAP1. The PPxY motif 2 motif lies at 555-558 (PPPY). Residues 578-608 (PCKDEQPSLPKEDDSEKSADSGDSGDKEKKQ) show a composition bias toward basic and acidic residues. The residue at position 612 (S612) is a Phosphoserine. Positions 620 to 629 (KKDEERRESR) are enriched in basic and acidic residues. S673 is modified (phosphoserine). Positions 704–1009 (FVKIKTLGIG…ADEIKAHPFF (306 aa)) constitute a Protein kinase domain. ATP contacts are provided by residues 710–718 (LGIGAFGEV) and K733. D827 serves as the catalytic Proton acceptor. S908 bears the Phosphoserine; by STK3/MST2 mark. Residues 1010–1089 (KTIDFSSDLR…RRFFDDNGYP (80 aa)) form the AGC-kinase C-terminal domain. T1078 bears the Phosphothreonine; by STK3/MST2 mark. A disordered region spans residues 1104 to 1129 (QGSEQQSDEDDQHTSSDGNNRDLVYV).

It belongs to the protein kinase superfamily. AGC Ser/Thr protein kinase family. In terms of assembly, complexes with CDK1 in early mitosis. LATS1-associated CDK1 has no mitotic cyclin partner and no apparent kinase activity. Binds phosphorylated ZYX, locating this protein to the mitotic spindle and suggesting a role for actin regulatory proteins during mitosis. Binds to and colocalizes with LIMK1 at the actomyosin contractile ring during cytokinesis. Interacts (via PPxY motif 2) with YAP1 (via WW domains). Interacts with MOB1A and MOB1B. Interacts with LIMD1, WTIP and AJUBA. Interacts with ESR1, DCAF1 and DCAF13; probably recruits DCAF1 and DCAF13 to ESR1 to promote ESR1 ubiquitination and ubiquitin-mediated proteasomal degradation. Interacts with STK3/MST2; this interaction is inhibited in the presence of DLG5. Interacts with SCRIB in the presence of DLG5. Interacts with WWTR1/TAZ. Interacts with WWC1, WWC2 and WWC3 (via their WW domains). Mg(2+) is required as a cofactor. Post-translationally, autophosphorylated and phosphorylated during M-phase of the cell cycle. Phosphorylated by STK3/MST2 at Ser-908 and Thr-1078, which results in its activation. Phosphorylated by MAP4Ks; in parallel to STK3/MST2 and resulting to its activation. Phosphorylation at Ser-463 by NUAK1 and NUAK2 leads to decreased protein level and is required to regulate cellular senescence and cellular ploidy.

Its subcellular location is the cytoplasm. It is found in the cytoskeleton. It localises to the microtubule organizing center. The protein resides in the centrosome. The protein localises to the spindle. Its subcellular location is the midbody. It is found in the spindle pole body. The enzyme catalyses L-seryl-[protein] + ATP = O-phospho-L-seryl-[protein] + ADP + H(+). It catalyses the reaction L-threonyl-[protein] + ATP = O-phospho-L-threonyl-[protein] + ADP + H(+). Functionally, negative regulator of YAP1 in the Hippo signaling pathway that plays a pivotal role in organ size control and tumor suppression by restricting proliferation and promoting apoptosis. The core of this pathway is composed of a kinase cascade wherein STK3/MST2 and STK4/MST1, in complex with its regulatory protein SAV1, phosphorylates and activates LATS1/2 in complex with its regulatory protein MOB1, which in turn phosphorylates and inactivates YAP1 oncoprotein and WWTR1/TAZ. Phosphorylation of YAP1 by LATS1 inhibits its translocation into the nucleus to regulate cellular genes important for cell proliferation, cell death, and cell migration. Acts as a tumor suppressor which plays a critical role in maintenance of ploidy through its actions in both mitotic progression and the G1 tetraploidy checkpoint. Negatively regulates G2/M transition by down-regulating CDK1 kinase activity. Involved in the control of p53 expression. Affects cytokinesis by regulating actin polymerization through negative modulation of LIMK1. May also play a role in endocrine function. Plays a role in mammary gland epithelial cell differentiation, both through the Hippo signaling pathway and the intracellular estrogen receptor signaling pathway by promoting the degradation of ESR1. Acts as an activator of the NLRP3 inflammasome by mediating phosphorylation of 'Ser-265' of NLRP3 following NLRP3 palmitoylation, promoting NLRP3 activation by NEK7. This chain is Serine/threonine-protein kinase LATS1, found in Mus musculus (Mouse).